The following is a 443-amino-acid chain: Exodeoxyribonuclease 7 large subunit (443 aa).

Belongs to the XseA family. In terms of assembly, heterooligomer composed of large and small subunits.

The protein localises to the cytoplasm. It carries out the reaction Exonucleolytic cleavage in either 5'- to 3'- or 3'- to 5'-direction to yield nucleoside 5'-phosphates.. Functionally, bidirectionally degrades single-stranded DNA into large acid-insoluble oligonucleotides, which are then degraded further into small acid-soluble oligonucleotides. The sequence is that of Exodeoxyribonuclease 7 large subunit from Vibrio vulnificus (strain CMCP6).